A 226-amino-acid polypeptide reads, in one-letter code: Probable chemoreceptor glutamine deamidase CheD (226 aa).

The interval 207-226 (PGGMRVERFDTPSRRDPVGA) is disordered.

The protein belongs to the CheD family.

The enzyme catalyses L-glutaminyl-[protein] + H2O = L-glutamyl-[protein] + NH4(+). In terms of biological role, probably deamidates glutamine residues to glutamate on methyl-accepting chemotaxis receptors (MCPs), playing an important role in chemotaxis. This Bordetella bronchiseptica (strain ATCC BAA-588 / NCTC 13252 / RB50) (Alcaligenes bronchisepticus) protein is Probable chemoreceptor glutamine deamidase CheD.